The sequence spans 80 residues: N-V protease (80 aa).

Belongs to the peptidase S8 family. Monomer. In terms of tissue distribution, body cavity.

It localises to the secreted. Its activity is regulated as follows. Inhibited by the serine protease inhibitors DFP, PMSF and TLCK. Not inhibited by the serine protease inhibitors aprotinin, elastinal, SBTI and benzamidine, the cysteine protease inhibitors iodoacetate and E64, or the metalloprotease inhibitors EDTA and EGTA. Its function is as follows. Serine protease. Hydrolyzes the alpha chains of fibrin and fibrinogen completely, has lower activity on the beta and gamma chains of fibrin and fibrinogen. The sequence is that of N-V protease from Alitta virens (Sandworm).